Consider the following 370-residue polypeptide: Phosphate-binding protein PstS2 (370 aa).

The first 22 residues, 1–22 (MKFARSGAAVSLLAAGTLVLTA), serve as a signal peptide directing secretion. Cys23 is lipidated: N-palmitoyl cysteine. The S-diacylglycerol cysteine moiety is linked to residue Cys23. Phosphate is bound by residues 54–56 (STA), Ser84, Asp102, and 191–193 (SGT).

Belongs to the PstS family. As to quaternary structure, the complex is composed of two ATP-binding proteins (PstB), two transmembrane proteins (PstC and PstA) and a solute-binding protein (PstS).

The protein resides in the cell membrane. It localises to the secreted. Its function is as follows. Functions in inorganic phosphate uptake, a phosphate-binding protein, although probably not the main uptake protein under phosphate starvation. Part of the ABC transporter complex PstSACB involved in phosphate import. The protein is Phosphate-binding protein PstS2 (pstS2) of Mycobacterium bovis (strain BCG / Pasteur 1173P2).